We begin with the raw amino-acid sequence, 1093 residues long: ATP-dependent helicase/deoxyribonuclease subunit B (1093 aa).

This sequence belongs to the helicase family. AddB/RexB type 2 subfamily. In terms of assembly, heterodimer of AddA and RexB. Mg(2+) is required as a cofactor.

In terms of biological role, the heterodimer acts as both an ATP-dependent DNA helicase and an ATP-dependent, dual-direction single-stranded exonuclease. Recognizes the chi site generating a DNA molecule suitable for the initiation of homologous recombination. This subunit has 5' -&gt; 3' nuclease activity but not helicase activity. This chain is ATP-dependent helicase/deoxyribonuclease subunit B, found in Streptococcus sanguinis (strain SK36).